A 302-amino-acid chain; its full sequence is Sulfate adenylyltransferase subunit 2 (302 aa).

It belongs to the PAPS reductase family. CysD subfamily. As to quaternary structure, heterodimer composed of CysD, the smaller subunit, and CysN.

It catalyses the reaction sulfate + ATP + H(+) = adenosine 5'-phosphosulfate + diphosphate. The protein operates within sulfur metabolism; hydrogen sulfide biosynthesis; sulfite from sulfate: step 1/3. Functionally, with CysN forms the ATP sulfurylase (ATPS) that catalyzes the adenylation of sulfate producing adenosine 5'-phosphosulfate (APS) and diphosphate, the first enzymatic step in sulfur assimilation pathway. APS synthesis involves the formation of a high-energy phosphoric-sulfuric acid anhydride bond driven by GTP hydrolysis by CysN coupled to ATP hydrolysis by CysD. This chain is Sulfate adenylyltransferase subunit 2, found in Enterobacter sp. (strain 638).